A 490-amino-acid polypeptide reads, in one-letter code: Adenylosuccinate synthetase 1, chloroplastic (490 aa).

The N-terminal 47 residues, 1–47 (MSLSTLSHPAAAAAAATGSGKSHFRTAPAAQSVRFPKARPPVPAAVS), are a transit peptide targeting the chloroplast. A disordered region spans residues 14-36 (AAATGSGKSHFRTAPAAQSVRFP). Residues 77 to 83 (GDEGKGK) and 105 to 107 (GHT) each bind GTP. The active-site Proton acceptor is the D78. D78 and G105 together coordinate Mg(2+). IMP contacts are provided by residues 78 to 81 (DEGK), 103 to 106 (NAGH), T195, R209, Q289, T304, and R368. The active-site Proton donor is the H106. 364 to 370 (TTTGRPR) contacts substrate. Residues R370, 396 to 398 (KLD), and 479 to 481 (GVG) each bind GTP.

This sequence belongs to the adenylosuccinate synthetase family. In terms of assembly, homodimer. The cofactor is Mg(2+).

It localises to the plastid. It is found in the chloroplast. The enzyme catalyses IMP + L-aspartate + GTP = N(6)-(1,2-dicarboxyethyl)-AMP + GDP + phosphate + 2 H(+). It functions in the pathway purine metabolism; AMP biosynthesis via de novo pathway; AMP from IMP: step 1/2. In terms of biological role, plays an important role in the de novo pathway and in the salvage pathway of purine nucleotide biosynthesis. Catalyzes the first committed step in the biosynthesis of AMP from IMP. In Sorghum bicolor (Sorghum), this protein is Adenylosuccinate synthetase 1, chloroplastic.